We begin with the raw amino-acid sequence, 450 residues long: Phosphoglucosamine mutase (450 aa).

Residue Ser-101 is the Phosphoserine intermediate of the active site. Residues Ser-101, Asp-242, Asp-244, and Asp-246 each coordinate Mg(2+). Ser-101 carries the phosphoserine modification.

The protein belongs to the phosphohexose mutase family. Mg(2+) serves as cofactor. Activated by phosphorylation.

The enzyme catalyses alpha-D-glucosamine 1-phosphate = D-glucosamine 6-phosphate. Its function is as follows. Catalyzes the conversion of glucosamine-6-phosphate to glucosamine-1-phosphate. In Rhodopseudomonas palustris (strain TIE-1), this protein is Phosphoglucosamine mutase.